A 201-amino-acid chain; its full sequence is Ribonuclease HII (201 aa).

Residues 12–201 (GIVCGIDEVG…FAPVAQYMLF (190 aa)) form the RNase H type-2 domain. Asp18, Glu19, and Asp113 together coordinate a divalent metal cation.

This sequence belongs to the RNase HII family. Mn(2+) serves as cofactor. Mg(2+) is required as a cofactor.

Its subcellular location is the cytoplasm. The enzyme catalyses Endonucleolytic cleavage to 5'-phosphomonoester.. Endonuclease that specifically degrades the RNA of RNA-DNA hybrids. This Paramagnetospirillum magneticum (strain ATCC 700264 / AMB-1) (Magnetospirillum magneticum) protein is Ribonuclease HII (rnhB).